We begin with the raw amino-acid sequence, 66 residues long: MMAEKKGKTVTVEQIGSPIRRPAEQRATLIGLGLNKMHRRSTLEDTPAVRGMIAKLPHLVRVVDEA.

This sequence belongs to the universal ribosomal protein uL30 family. As to quaternary structure, part of the 50S ribosomal subunit.

The chain is Large ribosomal subunit protein uL30 from Brucella anthropi (strain ATCC 49188 / DSM 6882 / CCUG 24695 / JCM 21032 / LMG 3331 / NBRC 15819 / NCTC 12168 / Alc 37) (Ochrobactrum anthropi).